The chain runs to 780 residues: APC membrane recruitment protein 3 (780 aa).

Over residues 20–32 (KLIDSPAKEDPDK) the composition is skewed to basic and acidic residues. Disordered regions lie at residues 20–59 (KLIDSPAKEDPDKWPLSLGEQQRAYGEKSSQTSPCSQGYG), 341–407 (ELPL…FPRD), 547–569 (KGREDQATTCFPPSRQEPWAHSG), 582–617 (GEPARGSKTPSKDDSLEEGTQDFSEGQSSSEATMTS), 635–659 (KELGTPGNLRYSQGPLRPGHRGSAL), 706–729 (KNPISSKPNEAAGCGLSSSASPQD), and 749–780 (LGPQACSSVDSQPQQLCPRAPEQVPHRGSVGS). Residues 354-376 (SKASSIDTGTPKSEQPESVSTSD) are compositionally biased toward polar residues. Polar residues predominate over residues 602 to 617 (QDFSEGQSSSEATMTS). Positions 753 to 763 (ACSSVDSQPQQ) are enriched in polar residues.

It belongs to the Amer family.

Its subcellular location is the cell membrane. Its function is as follows. Regulator of the canonical Wnt signaling pathway. Acts by specifically binding phosphatidylinositol 4,5-bisphosphate (PtdIns(4,5)P2), translocating to the cell membrane. The sequence is that of APC membrane recruitment protein 3 (Amer3) from Mus musculus (Mouse).